Here is a 537-residue protein sequence, read N- to C-terminus: uncharacterized protein (537 aa).

Residues 10-56 form a disordered region; it reads HHDVEPQNVEEEPPLTGQTIVTEDKLETSAKDKKHESPSMSEDEEGS. A compositionally biased stretch (basic and acidic residues) spans 31-46; it reads TEDKLETSAKDKKHES. Helical transmembrane passes span 90-110, 133-153, 156-176, 180-200, 213-233, 243-263, 313-333, 348-368, 393-413, 422-442, 457-477, and 492-512; these read FVAT…TACI, LFIV…DIFG, WVYV…ALAY, MMAI…ANVA, GFGI…GSPI, WFYW…VLCP, PIIM…FLYL, YMGA…VVML, FLIS…FAFT, SPLI…LAMI, IAAF…LGII, and AFIS…GHLI.

This sequence belongs to the major facilitator superfamily. CAR1 family.

Its subcellular location is the endoplasmic reticulum. It is found in the golgi apparatus. It localises to the membrane. This is an uncharacterized protein from Schizosaccharomyces pombe (strain 972 / ATCC 24843) (Fission yeast).